The primary structure comprises 511 residues: MDIRPSEISKILKEQIKNFDQEAEFSEIGWVLSVGDGIARVYGLDNVQAGEMVSFSNGVQGMALNLEMDNVGVVIFGSDRDIREGDTVKRLGSIVDVPVGPELLGRVVDALGNPIDGKGPLNAKNRRRVDVKAPGIIPRQSVHEPMSTGLKAIDALIPIGRGQRELVIGDRQTGKTAILLDTFLNQKPFHENEAGSDQDKVYCIYVAIGQKRSTVAQFVKVLEERGALDYSIIVAATASDPAPMQFIAPLAGCAMGEYFRDNGQHALIGYDDLSKQAVAYRQMSLLLRRPPGREAYPGDVFYLHSRLLERAAKLNADNGSGSLTALPVIETQANDVSAYIPTNVISITDGQIFLETNLFYQGIRPAVNVGLSVSRVGSAAQIKAMKQVAGSIKGELAQYREMAAFAQFGSDLDASTQRLLNRGARLTELLKQPQFSPLKTEEQVVTIFAGVNGYLDALAVSDVGRFERGLLALLRSDHQELLNAIASQKQITDELKGKLVAILDRYAKNFS.

169–176 provides a ligand contact to ATP; sequence GDRQTGKT.

The protein belongs to the ATPase alpha/beta chains family. As to quaternary structure, F-type ATPases have 2 components, CF(1) - the catalytic core - and CF(0) - the membrane proton channel. CF(1) has five subunits: alpha(3), beta(3), gamma(1), delta(1), epsilon(1). CF(0) has three main subunits: a(1), b(2) and c(9-12). The alpha and beta chains form an alternating ring which encloses part of the gamma chain. CF(1) is attached to CF(0) by a central stalk formed by the gamma and epsilon chains, while a peripheral stalk is formed by the delta and b chains.

It is found in the cell inner membrane. It carries out the reaction ATP + H2O + 4 H(+)(in) = ADP + phosphate + 5 H(+)(out). Its function is as follows. Produces ATP from ADP in the presence of a proton gradient across the membrane. The alpha chain is a regulatory subunit. This Bartonella bacilliformis (strain ATCC 35685 / KC583 / Herrer 020/F12,63) protein is ATP synthase subunit alpha.